The primary structure comprises 116 residues: Large ribosomal subunit protein bL17 (116 aa).

It belongs to the bacterial ribosomal protein bL17 family. As to quaternary structure, part of the 50S ribosomal subunit. Contacts protein L32.

The chain is Large ribosomal subunit protein bL17 from Thermosynechococcus vestitus (strain NIES-2133 / IAM M-273 / BP-1).